The chain runs to 472 residues: Spliceosome-associated protein CWC27 homolog (472 aa).

S2 is subject to N-acetylserine. One can recognise a PPIase cyclophilin-type domain in the interval 11–166; that stretch reads TNGKVLLKTT…NPHKIKSCEV (156 aa). N109 and N201 each carry an N-linked (GlcNAc...) asparagine glycan. Residues 206–230 are a coiled coil; sequence SFGEEAEEEEEEVNRVSQSMKGKSK. 2 disordered regions span residues 206 to 386 and 398 to 472; these read SFGE…DQTL and QAIA…KERR. Residues 231 to 241 show a composition bias toward basic and acidic residues; it reads SSHDLLKDDPH. Acidic residues predominate over residues 257 to 268; sequence DLVDDGEDESAE. 3 stretches are compositionally biased toward basic and acidic residues: residues 269–286, 304–347, and 359–371; these read HDEY…ERIA, EVEK…KRSE, and EYRR…EALR. Residues 306 to 377 adopt a coiled-coil conformation; it reads EKKSVSRSEE…EALRKQQSKK (72 aa). Position 346 is a phosphoserine (S346). Over residues 404 to 418 the composition is skewed to acidic residues; it reads PENDIPETEVEDDEG. Composition is skewed to basic and acidic residues over residues 425-437 and 457-472; these read QFED…KDAS and RREE…KERR.

Belongs to the cyclophilin-type PPIase family. As to quaternary structure, part of the activated spliceosome B/catalytic step 1 spliceosome, one of the forms of the spliceosome which has a well-formed active site but still cannot catalyze the branching reaction and is composed at least of 52 proteins, the U2, U5 and U6 snRNAs and the pre-mRNA. Recruited during early steps of activated spliceosome B maturation, it is probably one of the first proteins released from this complex as he matures to the spliceosome C complex. Component of the minor spliceosome, which splices U12-type introns.

Its subcellular location is the nucleus. In terms of biological role, as part of the spliceosome, plays a role in pre-mRNA splicing. Probable inactive PPIase with no peptidyl-prolyl cis-trans isomerase activity. As a component of the minor spliceosome, involved in the splicing of U12-type introns in pre-mRNAs. The chain is Spliceosome-associated protein CWC27 homolog from Homo sapiens (Human).